The following is a 298-amino-acid chain: Probable alpha-L-glutamate ligase 2 (298 aa).

An ATP-grasp domain is found at 104 to 287; sequence MQLLSRQGIG…VADAIICFME (184 aa). ATP-binding positions include Lys-141, 178-179, Asp-187, and 211-213; these read EY and RSN. 3 residues coordinate Mg(2+): Asp-248, Glu-260, and Asn-262. Mn(2+) is bound by residues Asp-248, Glu-260, and Asn-262.

This sequence belongs to the RimK family. It depends on Mg(2+) as a cofactor. Mn(2+) is required as a cofactor.

This Shewanella frigidimarina (strain NCIMB 400) protein is Probable alpha-L-glutamate ligase 2.